The sequence spans 305 residues: Homoserine O-acetyltransferase (305 aa).

Residue cysteine 142 is the Acyl-thioester intermediate of the active site. Residues lysine 163 and serine 192 each coordinate substrate. Residue histidine 235 is the Proton acceptor of the active site. Residue glutamate 237 is part of the active site. A substrate-binding site is contributed by arginine 249.

Belongs to the MetA family.

The protein localises to the cytoplasm. The enzyme catalyses L-homoserine + acetyl-CoA = O-acetyl-L-homoserine + CoA. It participates in amino-acid biosynthesis; L-methionine biosynthesis via de novo pathway; O-acetyl-L-homoserine from L-homoserine: step 1/1. In terms of biological role, transfers an acetyl group from acetyl-CoA to L-homoserine, forming acetyl-L-homoserine. The protein is Homoserine O-acetyltransferase of Dinoroseobacter shibae (strain DSM 16493 / NCIMB 14021 / DFL 12).